We begin with the raw amino-acid sequence, 248 residues long: Ethylene-responsive transcription factor ERF026 (248 aa).

Residues 89-145 (VYRGIRCRSGKWVSEIREPKKTTRVWLGTYPTPEMAAAAYDVAALALKGGDTLLNFP) constitute a DNA-binding region (AP2/ERF). The disordered stretch occupies residues 225–248 (PPWMGSPPSDDSPENSDGESLWSY).

Belongs to the AP2/ERF transcription factor family. ERF subfamily.

The protein resides in the nucleus. In terms of biological role, probably acts as a transcriptional activator. Binds to the GCC-box pathogenesis-related promoter element. May be involved in the regulation of gene expression by stress factors and by components of stress signal transduction pathways. The polypeptide is Ethylene-responsive transcription factor ERF026 (ERF026) (Arabidopsis thaliana (Mouse-ear cress)).